Consider the following 318-residue polypeptide: Homeobox protein Nkx-2.5 (318 aa).

The homeobox DNA-binding region spans 137–196 (RRKPRVLFSQAQVYELERRFKQQRYLSPAERDQLASVLKLTSTQVKIWFQNRRYKCKRQR).

It belongs to the NK-2 homeobox family. Homodimer (via the homeobox); binds DNA as homodimer. Interacts (via the homeobox) with TBX5 (via the T-box); this complex binds DNA. Interacts with HIPK1 and HIPK2, but not HIPK3. Interacts with the C-terminal zinc finger of GATA4 through its homeobox domain. Also interacts with JARID2 which represses its ability to activate transcription of ANF. Interacts with FBLIM1. Interacts with TBX18. Interacts with histone methyltransferase NSD2 (via HMG box). Interacts with NEDD9. Interacts with TBX1.

The protein resides in the nucleus. Transcription factor required for the development of the heart and the spleen. During heart development, acts as a transcriptional activator of NPPA/ANF in cooperation with GATA4. May cooperate with TBX2 to negatively modulate expression of NPPA/ANF in the atrioventricular canal. Binds to the core DNA motif of NPPA promoter. Together with PBX1, required for spleen development through a mechanism that involves CDKN2B repression. Positively regulates transcription of genes such as COL3A1 and MMP2, resulting in increased pulmonary endothelial fibrosis in response to hypoxia. The polypeptide is Homeobox protein Nkx-2.5 (Nkx2-5) (Rattus norvegicus (Rat)).